The primary structure comprises 344 residues: Ribosomal RNA small subunit methyltransferase H 2 (344 aa).

S-adenosyl-L-methionine-binding positions include 78–80, D98, F131, D145, and Q152; that span reads GGH.

The protein belongs to the methyltransferase superfamily. RsmH family.

It is found in the cytoplasm. The catalysed reaction is cytidine(1402) in 16S rRNA + S-adenosyl-L-methionine = N(4)-methylcytidine(1402) in 16S rRNA + S-adenosyl-L-homocysteine + H(+). Its function is as follows. Specifically methylates the N4 position of cytidine in position 1402 (C1402) of 16S rRNA. The protein is Ribosomal RNA small subunit methyltransferase H 2 of Acholeplasma laidlawii (strain PG-8A).